Consider the following 389-residue polypeptide: 26S proteasome non-ATPase regulatory subunit 6 (389 aa).

Residues 193-361 form the PCI domain; it reads DFKQAAELFL…EIVETNRPDS (169 aa).

This sequence belongs to the proteasome subunit S10 family. In terms of assembly, component of the 19S proteasome regulatory particle complex. The 26S proteasome consists of a 20S core particle (CP) and two 19S regulatory subunits (RP). The regulatory particle is made of a lid composed of 9 subunits including PSMD6, a base containing 6 ATPases and few additional components.

Its function is as follows. Component of the 26S proteasome, a multiprotein complex involved in the ATP-dependent degradation of ubiquitinated proteins. This complex plays a key role in the maintenance of protein homeostasis by removing misfolded or damaged proteins, which could impair cellular functions, and by removing proteins whose functions are no longer required. Therefore, the proteasome participates in numerous cellular processes, including cell cycle progression, apoptosis, or DNA damage repair. This Mus musculus (Mouse) protein is 26S proteasome non-ATPase regulatory subunit 6 (Psmd6).